A 645-amino-acid polypeptide reads, in one-letter code: MNTGDVPATVTLESVNSVTFTQDTDGNIILHCPQNDGEDLGSDETTEPVHKRIRLSSEDGEDPQDSASTEYSVVTLPITDGDESFEVTMTATEMRDEELESDDLSETTGKDSSAQKKGEDVSAVSQAWFTTKEDKDTLVNKGHKWKQGMWSKEEIDLLMTNIELYLKNRGIQDPAEIIFEMSKEERKDFYRSIACGLNRPLFAVYRRVLRMYDNRNHVGKYTDEEINKLKELRQKHGNDWATIGSALGRSASSVKDRCRLMKDTCNTGKWTEEEERRLAEVVHELTGTEAGDVVTQGVSWASVAELVGTRSEKQCRSKWLNYLNWKQSGGTEWTKEDDINLVRRIAELEVEDENEINWDILASGWSSVRSPQWLRSKWWTIKRQVANHKELPFPVLLKGLQDVVEAPPSTMNKVVVVGSRSANASPSPVTALQIPVQIPVQITHVSSSDGSSGTSDSETITLNSGALQTFELLPSFHLQPTGTPGTYFLQTGTNQSLPLTLSANPTVTLTAAASPSSPDQIILHSLTTDTENVTVQMSHPGIIIQTVTSEDLADPLGQSELEGEQVLVKEEPSENQTNPAIEEPSEEQSKQGEKTLDSSKVVETVLMVPSPGSFIPTNEDISSDSVLPLGTLTDPILENQEEGSN.

Disordered regions lie at residues 34–71 (QNDG…STEY) and 95–119 (RDEE…KKGE). 2 stretches are compositionally biased toward acidic residues: residues 36–46 (DGEDLGSDETT) and 95–105 (RDEELESDDLS). Residues 219-257 (GKYTDEEINKLKELRQKHGNDWATIGSALGRSASSVKDR) enclose the Myb-like 1 domain. The HTH myb-type domain maps to 262–327 (KDTCNTGKWT…KWLNYLNWKQ (66 aa)). Positions 300 to 323 (WASVAELVGTRSEKQCRSKWLNYL) form a DNA-binding region, H-T-H motif. In terms of domain architecture, Myb-like 2 spans 333 to 382 (WTKEDDINLVRRIAELEVEDENEINWDILASGWSSVRSPQWLRSKWWTIK). The interval 568–645 (VKEEPSENQT…ILENQEEGSN (78 aa)) is disordered. Basic and acidic residues predominate over residues 587–597 (EQSKQGEKTLD). The span at 615–625 (IPTNEDISSDS) shows a compositional bias: polar residues.

This sequence belongs to the DMTF1 family.

The protein localises to the nucleus. Its function is as follows. Transcriptional activator which activates the CDKN2A/ARF locus in response to Ras-Raf signaling, thereby promoting p53/TP53-dependent growth arrest. Binds to the consensus sequence 5'-CCCG[GT]ATGT-3'. The polypeptide is Cyclin-D-binding Myb-like transcription factor 1 (dmtf1) (Danio rerio (Zebrafish)).